The chain runs to 256 residues: MLAKRIIPCLDVRDGQVVKGVQFRNHEIIGDIVPLAQRYAEEGADELVFYDITASSDGRTIDKSWVERVAQVIDIPFCVAGGIKSVEDAEKLFAFGADKISINSPALADPDLINRLADRFGVQAIVVGIDSWFEKETGKYWVNQYTGDESRTRQTHWQLLDWVKEVQQRGAGEIVLNMMNQDGVRQGYDIAQLKLVRNLCHIPLIASGGAGEMVHFRDAFIEANVDGALAASVFHKRIIDIGELKDYLRKEKIKIR.

Active-site residues include Asp-11 and Asp-130.

Belongs to the HisA/HisF family. Heterodimer of HisH and HisF.

The protein localises to the cytoplasm. It catalyses the reaction 5-[(5-phospho-1-deoxy-D-ribulos-1-ylimino)methylamino]-1-(5-phospho-beta-D-ribosyl)imidazole-4-carboxamide + L-glutamine = D-erythro-1-(imidazol-4-yl)glycerol 3-phosphate + 5-amino-1-(5-phospho-beta-D-ribosyl)imidazole-4-carboxamide + L-glutamate + H(+). It participates in amino-acid biosynthesis; L-histidine biosynthesis; L-histidine from 5-phospho-alpha-D-ribose 1-diphosphate: step 5/9. In terms of biological role, IGPS catalyzes the conversion of PRFAR and glutamine to IGP, AICAR and glutamate. The HisF subunit catalyzes the cyclization activity that produces IGP and AICAR from PRFAR using the ammonia provided by the HisH subunit. The chain is Imidazole glycerol phosphate synthase subunit HisF (hisF) from Pasteurella multocida (strain Pm70).